A 122-amino-acid polypeptide reads, in one-letter code: S-adenosylmethionine decarboxylase proenzyme (122 aa).

Residue serine 63 is the Schiff-base intermediate with substrate; via pyruvic acid of the active site. Position 63 is a pyruvic acid (Ser); by autocatalysis (serine 63). The Proton acceptor; for processing activity role is filled by histidine 68. Cysteine 83 serves as the catalytic Proton donor; for catalytic activity.

The protein belongs to the prokaryotic AdoMetDC family. Type 1 subfamily. As to quaternary structure, heterotetramer of two alpha and two beta chains arranged as a dimer of alpha/beta heterodimers. Requires pyruvate as cofactor. Is synthesized initially as an inactive proenzyme. Formation of the active enzyme involves a self-maturation process in which the active site pyruvoyl group is generated from an internal serine residue via an autocatalytic post-translational modification. Two non-identical subunits are generated from the proenzyme in this reaction, and the pyruvate is formed at the N-terminus of the alpha chain, which is derived from the carboxyl end of the proenzyme. The post-translation cleavage follows an unusual pathway, termed non-hydrolytic serinolysis, in which the side chain hydroxyl group of the serine supplies its oxygen atom to form the C-terminus of the beta chain, while the remainder of the serine residue undergoes an oxidative deamination to produce ammonia and the pyruvoyl group blocking the N-terminus of the alpha chain.

It carries out the reaction S-adenosyl-L-methionine + H(+) = S-adenosyl 3-(methylsulfanyl)propylamine + CO2. Its pathway is amine and polyamine biosynthesis; S-adenosylmethioninamine biosynthesis; S-adenosylmethioninamine from S-adenosyl-L-methionine: step 1/1. In terms of biological role, catalyzes the decarboxylation of S-adenosylmethionine to S-adenosylmethioninamine (dcAdoMet), the propylamine donor required for the synthesis of the polyamines spermine and spermidine from the diamine putrescine. This Methanococcus maripaludis (strain C7 / ATCC BAA-1331) protein is S-adenosylmethionine decarboxylase proenzyme.